Reading from the N-terminus, the 393-residue chain is Bone morphogenetic protein 15 (393 aa).

Positions 1–25 (MVLLSILRILLWGLVLFMEHRVQMT) are cleaved as a signal peptide. Positions 26–268 (QVGQPSIAHL…DPSLLLRRAR (243 aa)) are excised as a propeptide. Asn-86 and Asn-237 each carry an N-linked (GlcNAc...) asparagine glycan. 3 disulfides stabilise this stretch: Cys-292–Cys-358, Cys-321–Cys-390, and Cys-325–Cys-392. N-linked (GlcNAc...) asparagine glycosylation occurs at Asn-374.

It belongs to the TGF-beta family. In terms of assembly, homodimer. But, in contrast to other members of this family, cannot be disulfide-linked.

The protein localises to the secreted. In terms of biological role, may be involved in follicular development. Oocyte-specific growth/differentiation factor that stimulates folliculogenesis and granulosa cell (GC) growth. The protein is Bone morphogenetic protein 15 (BMP15) of Ovis aries (Sheep).